Reading from the N-terminus, the 320-residue chain is Ribosomal RNA large subunit methyltransferase F (320 aa).

A disordered region spans residues 1-20 (MHKSANSKTRKQSKGLHPRN).

The protein belongs to the methyltransferase superfamily. METTL16/RlmF family.

Its subcellular location is the cytoplasm. The catalysed reaction is adenosine(1618) in 23S rRNA + S-adenosyl-L-methionine = N(6)-methyladenosine(1618) in 23S rRNA + S-adenosyl-L-homocysteine + H(+). In terms of biological role, specifically methylates the adenine in position 1618 of 23S rRNA. The sequence is that of Ribosomal RNA large subunit methyltransferase F from Saccharophagus degradans (strain 2-40 / ATCC 43961 / DSM 17024).